The sequence spans 304 residues: Acetylglutamate kinase (304 aa).

Residues 82 to 83 (GG), Arg104, and Asn197 contribute to the substrate site.

It belongs to the acetylglutamate kinase family. ArgB subfamily.

It is found in the cytoplasm. It carries out the reaction N-acetyl-L-glutamate + ATP = N-acetyl-L-glutamyl 5-phosphate + ADP. It participates in amino-acid biosynthesis; L-arginine biosynthesis; N(2)-acetyl-L-ornithine from L-glutamate: step 2/4. Catalyzes the ATP-dependent phosphorylation of N-acetyl-L-glutamate. The sequence is that of Acetylglutamate kinase from Prochlorococcus marinus (strain NATL2A).